The chain runs to 88 residues: Large ribosomal subunit protein bL27 (88 aa).

Residues 1–26 are disordered; that stretch reads MAHKKGASSSSNGRDSEAKRLGVKRF.

Belongs to the bacterial ribosomal protein bL27 family.

The polypeptide is Large ribosomal subunit protein bL27 (Corynebacterium glutamicum (strain R)).